The chain runs to 319 residues: tRNA(Ile)-lysidine synthase (319 aa).

ATP is bound at residue Ser32–Ser37.

It belongs to the tRNA(Ile)-lysidine synthase family.

The protein localises to the cytoplasm. The enzyme catalyses cytidine(34) in tRNA(Ile2) + L-lysine + ATP = lysidine(34) in tRNA(Ile2) + AMP + diphosphate + H(+). In terms of biological role, ligates lysine onto the cytidine present at position 34 of the AUA codon-specific tRNA(Ile) that contains the anticodon CAU, in an ATP-dependent manner. Cytidine is converted to lysidine, thus changing the amino acid specificity of the tRNA from methionine to isoleucine. The protein is tRNA(Ile)-lysidine synthase of Chlamydia pneumoniae (Chlamydophila pneumoniae).